Here is a 347-residue protein sequence, read N- to C-terminus: Leucine-rich repeat-containing protein 69 (347 aa).

LRR repeat units follow at residues 38–60, 61–82, 84–105, 108–129, 131–153, 154–175, 177–199, and 200–222; these read GLKT…CNLT, QLTT…MKYL, SLKN…ACDG, NLIL…VSRL, SLTY…CFLE, NLVE…IKFL, KLQK…CDLK, and KLRI…QDLK.

Belongs to the LRRC69 family.

This chain is Leucine-rich repeat-containing protein 69 (LRRC69), found in Homo sapiens (Human).